A 68-amino-acid chain; its full sequence is 1-carboxybiuret hydrolase subunit AtzG (68 aa).

In terms of assembly, heterotetramer consisting of 2 AtzE and 2 AtzG subunits.

It functions in the pathway xenobiotic degradation; atrazine degradation. In terms of biological role, important for the activity of the AtzE subunit of 1-carboxybiuret hydrolase. This chain is 1-carboxybiuret hydrolase subunit AtzG, found in Pseudomonas sp. (strain ADP).